Reading from the N-terminus, the 135-residue chain is Small ribosomal subunit protein uS12 (135 aa).

Positions 1 to 20 (MPTINQLVRKGRHSKVTKSK) are disordered. Residues 9-18 (RKGRHSKVTK) are compositionally biased toward basic residues. The residue at position 102 (Asp-102) is a 3-methylthioaspartic acid.

It belongs to the universal ribosomal protein uS12 family. Part of the 30S ribosomal subunit. Contacts proteins S8 and S17. May interact with IF1 in the 30S initiation complex.

Its function is as follows. With S4 and S5 plays an important role in translational accuracy. In terms of biological role, interacts with and stabilizes bases of the 16S rRNA that are involved in tRNA selection in the A site and with the mRNA backbone. Located at the interface of the 30S and 50S subunits, it traverses the body of the 30S subunit contacting proteins on the other side and probably holding the rRNA structure together. The combined cluster of proteins S8, S12 and S17 appears to hold together the shoulder and platform of the 30S subunit. The protein is Small ribosomal subunit protein uS12 of Lactobacillus helveticus (strain DPC 4571).